The following is a 234-amino-acid chain: MLFSPPLQRATLIQRYKRFLADVITPDGTTLTLHCPNTGAMTGCATPGDTVWYSTSENTKRKYPHTWELTETQSGAFICVNTLRANQLTKEAIQENRLPALAGYNILKSEVKYGAERSRIDFMLQADFRPDCYIEVKSVTLAEKENGYFPDAITERGQKHLRELMGVAAAGHRAVVVFAVLHSAITRFSPARHIDIKYAQLLSEAQNKGVEVLAYKAELSAQKMELNEPVPITL.

The segment at residues 201–220 is a DNA-binding region (H-T-H motif); that stretch reads LLSEAQNKGVEVLAYKAELS.

Belongs to the SfsA family.

Functionally, binds to DNA non-specifically. Could be a regulatory factor involved in maltose metabolism. In Salmonella dublin (strain CT_02021853), this protein is Sugar fermentation stimulation protein A.